A 60-amino-acid chain; its full sequence is Small, acid-soluble spore protein H (60 aa).

Belongs to the SspH family.

It is found in the spore core. The protein is Small, acid-soluble spore protein H of Bacillus velezensis (strain DSM 23117 / BGSC 10A6 / LMG 26770 / FZB42) (Bacillus amyloliquefaciens subsp. plantarum).